Reading from the N-terminus, the 182-residue chain is Fatty-acid and retinol-binding protein 2 (182 aa).

The signal sequence occupies residues 1–17; sequence MIRAFLVVALASVAVFS. Coiled-coil stretches lie at residues 46–73 and 131–152; these read LKAITAEEKAALKELAQNHKEYKTEEEF and TLDSLKELAKGYIAEYKALSDD.

The protein belongs to the fatty-acid and retinol-binding protein (FARBP) family.

The protein resides in the secreted. Functionally, probably binds lipids. This Caenorhabditis elegans protein is Fatty-acid and retinol-binding protein 2 (far-2).